A 744-amino-acid chain; its full sequence is ATP-dependent zinc metalloprotease FtsH (744 aa).

Over 1-16 (MQDQNNSNTPKKKKLS) the chain is Cytoplasmic. The helical transmembrane segment at 17–37 (FWGIIGIVASILVLLVIAYII) threads the bilayer. Over 38–177 (YYYVSQTTVL…ESIWSTVLRY (140 aa)) the chain is Extracellular. A helical membrane pass occupies residues 178–198 (GTNIIFLLLFAASFIFMFMSF). The Cytoplasmic portion of the chain corresponds to 199-744 (RSQRGTGGLL…EEKSKDEKNN (546 aa)). 264–271 (GPPGTGKT) contributes to the ATP binding site. Histidine 486 is a Zn(2+) binding site. Residue glutamate 487 is part of the active site. The Zn(2+) site is built by histidine 490 and aspartate 564. The segment at 722–744 (IEANKSSSKSTVNEEKSKDEKNN) is disordered. Basic and acidic residues predominate over residues 733–744 (VNEEKSKDEKNN).

This sequence in the central section; belongs to the AAA ATPase family. In the C-terminal section; belongs to the peptidase M41 family. As to quaternary structure, homohexamer. Requires Zn(2+) as cofactor.

It localises to the cell membrane. Acts as a processive, ATP-dependent zinc metallopeptidase for both cytoplasmic and membrane proteins. Plays a role in the quality control of integral membrane proteins. This Metamycoplasma arthritidis (strain 158L3-1) (Mycoplasma arthritidis) protein is ATP-dependent zinc metalloprotease FtsH.